The primary structure comprises 186 residues: Inner membrane-spanning protein YciB (186 aa).

Transmembrane regions (helical) follow at residues phenylalanine 3–tyrosine 23, valine 24–histidine 44, alanine 49–histidine 69, tryptophan 76–leucine 96, leucine 121–phenylalanine 141, and phenylalanine 149–leucine 169.

Belongs to the YciB family.

The protein resides in the cell inner membrane. Its function is as follows. Plays a role in cell envelope biogenesis, maintenance of cell envelope integrity and membrane homeostasis. This is Inner membrane-spanning protein YciB from Ralstonia nicotianae (strain ATCC BAA-1114 / GMI1000) (Ralstonia solanacearum).